We begin with the raw amino-acid sequence, 120 residues long: MAVDQGFPRSVRLTRPEQYKQVFGDARKLSDAGFTLLVRDNDGDSARLGLAISKKCARRAVDRQRIKRLVRETFRQHRQHLAPVDVVVMCRPAVTGWDNARIRASLERFWARLSTPCANP.

Belongs to the RnpA family. Consists of a catalytic RNA component (M1 or rnpB) and a protein subunit.

The catalysed reaction is Endonucleolytic cleavage of RNA, removing 5'-extranucleotides from tRNA precursor.. RNaseP catalyzes the removal of the 5'-leader sequence from pre-tRNA to produce the mature 5'-terminus. It can also cleave other RNA substrates such as 4.5S RNA. The protein component plays an auxiliary but essential role in vivo by binding to the 5'-leader sequence and broadening the substrate specificity of the ribozyme. The chain is Ribonuclease P protein component from Thioalkalivibrio sulfidiphilus (strain HL-EbGR7).